A 472-amino-acid chain; its full sequence is Homeobox protein PKNOX2 (472 aa).

Residues 1–62 form a disordered region; sequence MMQHASPAPA…STPVPSAPID (62 aa). The segment covering 26–38 has biased composition (polar residues); it reads DSPQMTATAQPPS. A compositionally biased stretch (low complexity) spans 46-56; the sequence is SAPSAAASTPV. In terms of domain architecture, MEIS N-terminal spans 96–179; it reads GSECITSASF…MHSDNLLRND (84 aa). The homeobox DNA-binding region spans 291-350; it reads KRGVLPKHATNIMRSWLFQHLMHPYPTEDEKRQIAAQTNLTLLQVNNWFINARRRILQPM. Disordered stretches follow at residues 351 to 371, 386 to 405, and 422 to 472; these read LDAS…QHRP, QQQG…LDNL, and MAAH…DSLE. Basic residues predominate over residues 361-371; sequence KAKKIKSQHRP. Positions 429-454 are enriched in acidic residues; the sequence is LDGTEEEDEDEMEEEEEEELEEEVDE.

Belongs to the TALE/MEIS homeobox family.

Its subcellular location is the nucleus. The polypeptide is Homeobox protein PKNOX2 (PKNOX2) (Homo sapiens (Human)).